A 172-amino-acid chain; its full sequence is Adenine phosphoribosyltransferase (172 aa).

This sequence belongs to the purine/pyrimidine phosphoribosyltransferase family. In terms of assembly, homodimer.

It localises to the cytoplasm. It catalyses the reaction AMP + diphosphate = 5-phospho-alpha-D-ribose 1-diphosphate + adenine. Its pathway is purine metabolism; AMP biosynthesis via salvage pathway; AMP from adenine: step 1/1. Its function is as follows. Catalyzes a salvage reaction resulting in the formation of AMP, that is energically less costly than de novo synthesis. This Lactiplantibacillus plantarum (strain ATCC BAA-793 / NCIMB 8826 / WCFS1) (Lactobacillus plantarum) protein is Adenine phosphoribosyltransferase.